The sequence spans 70 residues: Small ribosomal subunit protein bS21 (70 aa).

This sequence belongs to the bacterial ribosomal protein bS21 family.

The protein is Small ribosomal subunit protein bS21 of Methylobacillus flagellatus (strain ATCC 51484 / DSM 6875 / VKM B-1610 / KT).